The primary structure comprises 209 residues: MIGLVGKKVGMTRIFTEDGVSIPVTVIEIEANRVTQVKGLENDGYTAIQVTTGAKKASRVTKPAAGHFAKAGVEAGRGLWEFRTAEGAEFTVGQSINVDIFADVKKVDVTGTSKGKGFAGTVKRWNFRTQDATHGNSLSHRVPGSIGQNQTPGKVFKGKKMAGQLGNERVTVQSLDVVRVDAERNLLLVKGAVPGATGSDLIVKPAVKA.

The segment at 132–153 (ATHGNSLSHRVPGSIGQNQTPG) is disordered. The residue at position 150 (Q150) is an N5-methylglutamine.

It belongs to the universal ribosomal protein uL3 family. As to quaternary structure, part of the 50S ribosomal subunit. Forms a cluster with proteins L14 and L19. In terms of processing, methylated by PrmB.

Functionally, one of the primary rRNA binding proteins, it binds directly near the 3'-end of the 23S rRNA, where it nucleates assembly of the 50S subunit. The sequence is that of Large ribosomal subunit protein uL3 from Erwinia tasmaniensis (strain DSM 17950 / CFBP 7177 / CIP 109463 / NCPPB 4357 / Et1/99).